The following is a 350-amino-acid chain: Cilia- and flagella-associated protein 36 (350 aa).

Residues 142 to 167 are a coiled coil; the sequence is SELEQQEMKILQEVLRRSKEEYDLQM. Disordered regions lie at residues 171–233 and 301–337; these read GLGS…ATTA and RQTG…QKRK. The segment covering 177-220 has biased composition (polar residues); sequence LASTSSSVSETPQNPEQRLSNGVSDPLTLTQPDSEMEESSTATQ. Positions 280 to 350 form a coiled coil; the sequence is VALQQRSEYL…EKLKEEVIKK (71 aa).

The protein belongs to the CFAP36 family.

It is found in the nucleus. The protein resides in the cytoplasm. Its subcellular location is the cell projection. It localises to the cilium. The protein localises to the flagellum. This chain is Cilia- and flagella-associated protein 36, found in Danio rerio (Zebrafish).